The sequence spans 205 residues: uncharacterized protein (205 aa).

The disordered stretch occupies residues alanine 72–arginine 114. The span at arginine 90 to leucine 100 shows a compositional bias: polar residues. Residues threonine 101–aspartate 110 are compositionally biased toward low complexity.

This is an uncharacterized protein from Equus caballus (Horse).